We begin with the raw amino-acid sequence, 124 residues long: Large ribosomal subunit protein bL12 (124 aa).

Belongs to the bacterial ribosomal protein bL12 family. Homodimer. Part of the ribosomal stalk of the 50S ribosomal subunit. Forms a multimeric L10(L12)X complex, where L10 forms an elongated spine to which 2 to 4 L12 dimers bind in a sequential fashion. Binds GTP-bound translation factors.

Functionally, forms part of the ribosomal stalk which helps the ribosome interact with GTP-bound translation factors. Is thus essential for accurate translation. This is Large ribosomal subunit protein bL12 from Mycoplasma mobile (strain ATCC 43663 / 163K / NCTC 11711) (Mesomycoplasma mobile).